We begin with the raw amino-acid sequence, 111 residues long: Viscotoxin-A3 (111 aa).

The signal sequence occupies residues 1–26 (MEVVRGSSLVLLVLLLGALLVSQVES). Cystine bridges form between cysteine 29-cysteine 66, cysteine 30-cysteine 58, and cysteine 42-cysteine 52. A propeptide spans 73–111 (FYCTLGCESSQCATNSNGDAEAVRCKTACSDLCQDVDDA) (acidic domain).

It belongs to the plant thionin (TC 1.C.44) family.

It is found in the secreted. In terms of biological role, thionins are small plant proteins which are toxic to animal cells. They seem to exert their toxic effect at the level of the cell membrane. Their precise function is not known. The protein is Viscotoxin-A3 (THI2.1) of Viscum album (European mistletoe).